The following is a 71-amino-acid chain: Gas vesicle protein A (71 aa).

Belongs to the gas vesicle GvpA family. In terms of assembly, the gas vesicle shell is 2 nm thick and consists of a single layer of this protein. It forms helical ribs nearly perpendicular to the long axis of the vesicle.

Its subcellular location is the gas vesicle shell. Gas vesicles are hollow, gas filled proteinaceous nanostructures found in some microorganisms. During planktonic growth they allow positioning of the organism at a favorable depth for light or nutrient acquisition. GvpA forms the protein shell. Its function is as follows. Cluster expression in E.coli (gvpA1-gvpA2-gvpC-gvpN-gvpJ-gvpK-gvpF-gvpG-gvpV-gvpW) allows cells to float and produces irregularly shaped gas vesicles. In Nostoc sp. (strain PCC 7120 / SAG 25.82 / UTEX 2576), this protein is Gas vesicle protein A.